The following is a 447-amino-acid chain: MTMTPREIVAELDKFIIGQNDAKRAVAIALRNRWRRMQLGEELRREIFPKNILMIGPTGVGKTEIARRLSDLAGAPFLKIEATKFTEVGYVGRDVESIIRDLVDVAVKMTREKAIRQVKSLAEEAAEERVLDALIPPARGGFQGEPTAEEKPTEKKESATRQLFRKKLRNGELDDKEIEVEVSAHPSFEIMGPPGMEEMVSQLQGIMSSMSSRRSKSRRLKVKDALRILGEEEAAKLVDEDQIKSTALASVEQNGIVFIDEIDKIVKREGAVGADVSREGVQRDLLPLVEGSTVFTKYGMVKTDHILFIASGAFHIAKPSDLVPELQGRFPIRVELKALTADDFVRILTEPKASLTEQYTELLKTENFGLSFTKDGIKRLAEIAYQVNDRSENIGARRLHTIMERLLEEVSFEATDKQGESITIDADYVNKQLKKLAEDEDLSRYIL.

ATP contacts are provided by residues Ile17 and 59-64; that span reads GVGKTE. Residues 136-160 are disordered; the sequence is PPARGGFQGEPTAEEKPTEKKESAT. Positions 148–159 are enriched in basic and acidic residues; the sequence is AEEKPTEKKESA. The ATP site is built by Asp260, Glu325, and Arg397.

It belongs to the ClpX chaperone family. HslU subfamily. As to quaternary structure, a double ring-shaped homohexamer of HslV is capped on each side by a ring-shaped HslU homohexamer. The assembly of the HslU/HslV complex is dependent on binding of ATP.

The protein resides in the cytoplasm. Its function is as follows. ATPase subunit of a proteasome-like degradation complex; this subunit has chaperone activity. The binding of ATP and its subsequent hydrolysis by HslU are essential for unfolding of protein substrates subsequently hydrolyzed by HslV. HslU recognizes the N-terminal part of its protein substrates and unfolds these before they are guided to HslV for hydrolysis. The sequence is that of ATP-dependent protease ATPase subunit HslU from Coxiella burnetii (strain RSA 331 / Henzerling II).